The chain runs to 94 residues: Selenoprotein K (94 aa).

The helical transmembrane segment at 20–42 (LSLITDFFWGIAEFVVLFFKTLL) threads the bilayer. The interval 48–94 (KRRSYGNSSDSRYDDGRGPPGNPPRRMGRINHLRGPSPPPMAGGUGR) is disordered. Position 92 (selenocysteine 92) is a non-standard amino acid, selenocysteine.

It belongs to the selenoprotein K family. Interacts with DERL1, DERL2, DERL3 and SELENOS. The SELENOK-SELENOS complex interacts with VCP. Interacts with ZDHHC6. In terms of processing, cleaved by CAPN2/m-calpain in resting macrophages but not in activated macrophages. Macrophage activation up-regulates expression of the calpain inhibitor CAST/calpastatin, resulting in inhibition of CAPN2 activity. Post-translationally, truncated SELENOK proteins produced by failed UGA/Sec decoding are ubiquitinated by the CRL2(KLHDC2) complex, which recognizes the diglycine (Gly-Gly) at the C-terminus of truncated SELENOK proteins. As to expression, highly expressed in heart.

It localises to the endoplasmic reticulum membrane. The protein localises to the cell membrane. Its function is as follows. Required for Ca(2+) flux in immune cells and plays a role in T-cell proliferation and in T-cell and neutrophil migration. Involved in endoplasmic reticulum-associated degradation (ERAD) of soluble glycosylated proteins. Required for palmitoylation and cell surface expression of CD36 and involved in macrophage uptake of low-density lipoprotein and in foam cell formation. Together with ZDHHC6, required for palmitoylation of ITPR1 in immune cells, leading to regulate ITPR1 stability and function. Plays a role in protection of cells from ER stress-induced apoptosis. Protects cells from oxidative stress when overexpressed in cardiomyocytes. This chain is Selenoprotein K, found in Homo sapiens (Human).